A 1072-amino-acid polypeptide reads, in one-letter code: Carbamoyl phosphate synthase large chain (1072 aa).

The interval 1 to 401 (MPKYKDINKV…SLLKAVRSLE (401 aa)) is carboxyphosphate synthetic domain. Residues Arg129, Arg169, Gly175, Gly176, Lys208, Leu210, Glu215, Gly241, Val242, His243, Gln284, and Glu298 each contribute to the ATP site. The region spanning 133–327 (KRKMQEIGEP…IAKVAAKIAI (195 aa)) is the ATP-grasp 1 domain. Residues Gln284, Glu298, and Asn300 each coordinate Mg(2+). The Mn(2+) site is built by Gln284, Glu298, and Asn300. Positions 402-544 (IKAYGLRLNN…YIYSTYGEED (143 aa)) are oligomerization domain. A carbamoyl phosphate synthetic domain region spans residues 545–929 (EVEIHEIPKV…ALYKALEGAG (385 aa)). Residues 671–861 (SKLLKELNIN…MVKLAVEVAL (191 aa)) enclose the ATP-grasp 2 domain. 10 residues coordinate ATP: Arg707, Lys746, Ile748, Glu752, Gly777, Val778, His779, Ser780, Gln820, and Glu832. 3 residues coordinate Mg(2+): Gln820, Glu832, and Asn834. Residues Gln820, Glu832, and Asn834 each coordinate Mn(2+). The region spanning 930-1072 (LKIPKKGKIL…QKDNVKNLVL (143 aa)) is the MGS-like domain. Residues 930–1072 (LKIPKKGKIL…QKDNVKNLVL (143 aa)) form an allosteric domain region.

Belongs to the CarB family. As to quaternary structure, composed of two chains; the small (or glutamine) chain promotes the hydrolysis of glutamine to ammonia, which is used by the large (or ammonia) chain to synthesize carbamoyl phosphate. Tetramer of heterodimers (alpha,beta)4. Requires Mg(2+) as cofactor. Mn(2+) serves as cofactor.

The enzyme catalyses hydrogencarbonate + L-glutamine + 2 ATP + H2O = carbamoyl phosphate + L-glutamate + 2 ADP + phosphate + 2 H(+). It carries out the reaction hydrogencarbonate + NH4(+) + 2 ATP = carbamoyl phosphate + 2 ADP + phosphate + 2 H(+). The protein operates within amino-acid biosynthesis; L-arginine biosynthesis; carbamoyl phosphate from bicarbonate: step 1/1. Its pathway is pyrimidine metabolism; UMP biosynthesis via de novo pathway; (S)-dihydroorotate from bicarbonate: step 1/3. Its function is as follows. Large subunit of the glutamine-dependent carbamoyl phosphate synthetase (CPSase). CPSase catalyzes the formation of carbamoyl phosphate from the ammonia moiety of glutamine, carbonate, and phosphate donated by ATP, constituting the first step of 2 biosynthetic pathways, one leading to arginine and/or urea and the other to pyrimidine nucleotides. The large subunit (synthetase) binds the substrates ammonia (free or transferred from glutamine from the small subunit), hydrogencarbonate and ATP and carries out an ATP-coupled ligase reaction, activating hydrogencarbonate by forming carboxy phosphate which reacts with ammonia to form carbamoyl phosphate. This is Carbamoyl phosphate synthase large chain from Thermoanaerobacter sp. (strain X514).